Reading from the N-terminus, the 573-residue chain is 2-succinyl-5-enolpyruvyl-6-hydroxy-3-cyclohexene-1-carboxylate synthase (573 aa).

The protein belongs to the TPP enzyme family. MenD subfamily. As to quaternary structure, homodimer. Mg(2+) serves as cofactor. It depends on Mn(2+) as a cofactor. Thiamine diphosphate is required as a cofactor.

The catalysed reaction is isochorismate + 2-oxoglutarate + H(+) = 5-enolpyruvoyl-6-hydroxy-2-succinyl-cyclohex-3-ene-1-carboxylate + CO2. The protein operates within quinol/quinone metabolism; 1,4-dihydroxy-2-naphthoate biosynthesis; 1,4-dihydroxy-2-naphthoate from chorismate: step 2/7. It participates in quinol/quinone metabolism; menaquinone biosynthesis. Its function is as follows. Catalyzes the thiamine diphosphate-dependent decarboxylation of 2-oxoglutarate and the subsequent addition of the resulting succinic semialdehyde-thiamine pyrophosphate anion to isochorismate to yield 2-succinyl-5-enolpyruvyl-6-hydroxy-3-cyclohexene-1-carboxylate (SEPHCHC). The polypeptide is 2-succinyl-5-enolpyruvyl-6-hydroxy-3-cyclohexene-1-carboxylate synthase (Shewanella baltica (strain OS195)).